The chain runs to 823 residues: Protein FAM83G (823 aa).

At A2 the chain carries N-acetylalanine. The tract at residues 2–312 is DUF1669; that stretch reads AFSQVQCLDD…LYLMSHSVSL (311 aa). At S4 the chain carries Phosphoserine. A disordered region spans residues 75 to 108; sequence DPGSEDPRGTGPSQGPEDNGVGDGEEASGADGVP. 3 positions are modified to phosphoserine: S124, S127, and S356. The interval 450–823 is disordered; the sequence is RDTSQASAQH…AQAPRDRKDP (374 aa). Polar residues predominate over residues 452-465; that stretch reads TSQASAQHQLWKQS. A compositionally biased stretch (pro residues) spans 497-508; that stretch reads DPEPLPPVPKPR. Basic and acidic residues predominate over residues 529-543; the sequence is LPKEEAPQNGTDHRL. The segment covering 578–587 has biased composition (acidic residues); the sequence is GVEEEDDDDY. Residues S610, S614, S616, S650, and S666 each carry the phosphoserine modification. 2 stretches are compositionally biased toward basic and acidic residues: residues 672-681 and 809-823; these read RGREEADALK and DSKR…RKDP.

This sequence belongs to the FAM83 family. Interacts with SMAD1 (via MH2 domain); in a SMAD4-independent manner. Directly interacts (via DUF1669) with casein kinase isoforms CSNK1A1 and CSNK1A1L. Post-translationally, phosphorylated in vitro by CSNK1A1. In terms of processing, BMP signaling induces the phosphorylation by BMPR1A at Ser-610, Ser-614 and Ser-616. Phosphorylation at Ser-610 is necessary for the activation of SMAD4-independent BMP target genes such as NEDD9 and ASNS.

It localises to the cytoplasm. The protein localises to the cytosol. Its subcellular location is the nucleus. In terms of biological role, substrate for type I BMP receptor kinase involved in regulation of some target genes of the BMP signaling pathway. Also regulates the expression of several non-BMP target genes, suggesting a role in other signaling pathways. In Homo sapiens (Human), this protein is Protein FAM83G (FAM83G).